Here is a 1167-residue protein sequence, read N- to C-terminus: Integrin alpha-E (1167 aa).

The N-terminal stretch at M1–A19 is a signal peptide. Topologically, residues F20–S1114 are extracellular. FG-GAP repeat units follow at residues A27 to I81 and Q84 to Q142. N-linked (GlcNAc...) asparagine glycosylation is present at N51. Intrachain disulfides connect C72-C83 and C130-C164. The interval E149 to D192 is X-domain (extra domain). Positions Y163 to E191 are disordered. Residues G193–M382 enclose the VWFA domain. Residues N256, N314, N341, N364, N418, and N437 are each glycosylated (N-linked (GlcNAc...) asparagine). An FG-GAP 3 repeat occupies E383–F435. 4 FG-GAP repeats span residues Q438 to D491, A492 to F552, A555 to D619, and Q623 to D683. Ca(2+) is bound by residues D514, D516, D518, D522, D578, N580, D582, D586, D646, N648, D650, and D654. C698 and C754 are disulfide-bonded. N-linked (GlcNAc...) asparagine glycans are attached at residues N718 and N773. A disulfide bond links C814 and C820. N829 and N846 each carry an N-linked (GlcNAc...) asparagine glycan. Residues C884 and C898 are joined by a disulfide bond. 4 N-linked (GlcNAc...) asparagine glycosylation sites follow: N911, N925, N968, and N1013. Disulfide bonds link C998–C1023 and C1031–C1047. 2 N-linked (GlcNAc...) asparagine glycosylation sites follow: N1055 and N1086. A helical transmembrane segment spans residues L1115 to F1137. Over K1138–D1167 the chain is Cytoplasmic. The GFFKR motif signature appears at G1140 to R1144.

It belongs to the integrin alpha chain family. As to quaternary structure, heterodimer of an alpha and a beta subunit. The alpha subunit is composed of a heavy and a light chains linked by a disulfide bond. Alpha-E associates with beta-7.

The protein resides in the membrane. Integrin alpha-E/beta-7 is a receptor for E-cadherin. It mediates adhesion of intra-epithelial T-lymphocytes to epithelial cell monolayers. Mice expressing a null mutation of the alpha-E subunit gene exhibit a marked reduction in the numbers of intraepithelial lymphocytes in the gut and in the development of gut-associated lymphoid aggregates, supporting a specific role for this integrin in mediating retention of lymphocytes in the intestinal wall. The polypeptide is Integrin alpha-E (Itgae) (Mus musculus (Mouse)).